Here is a 453-residue protein sequence, read N- to C-terminus: Aldehyde dehydrogenase, dimeric NADP-preferring (453 aa).

An N-acetylserine modification is found at Ser2. At Lys178 the chain carries N6-acetyllysine. 188–193 lines the NAD(+) pocket; the sequence is GSTAVG. Position 194 is an N6-acetyllysine (Lys194). Catalysis depends on residues Glu210 and Cys244.

It belongs to the aldehyde dehydrogenase family. As to quaternary structure, homodimer. In terms of tissue distribution, constitutively expressed in cornea, stomach, skin, bladder and lungs. Lowest expression levels in lungs and bladder.

Its subcellular location is the cytoplasm. It carries out the reaction an aldehyde + NAD(+) + H2O = a carboxylate + NADH + 2 H(+). It catalyses the reaction octanal + NAD(+) + H2O = octanoate + NADH + 2 H(+). ALDHs play a major role in the detoxification of alcohol-derived acetaldehyde. They are involved in the metabolism of corticosteroids, biogenic amines, neurotransmitters, and lipid peroxidation. Oxidizes medium and long chain aldehydes into non-toxic fatty acids. Preferentially oxidizes aromatic aldehyde substrates. Comprises about 50 percent of corneal epithelial soluble proteins. May play a role in preventing corneal damage caused by ultraviolet light. The chain is Aldehyde dehydrogenase, dimeric NADP-preferring (Aldh3a1) from Mus musculus (Mouse).